The primary structure comprises 348 residues: Flagellar P-ring protein (348 aa).

Residues 1 to 16 form the signal peptide; it reads MRIFLLCLALSLSVFA.

This sequence belongs to the FlgI family. As to quaternary structure, the basal body constitutes a major portion of the flagellar organelle and consists of four rings (L,P,S, and M) mounted on a central rod.

Its subcellular location is the periplasm. It is found in the bacterial flagellum basal body. In terms of biological role, assembles around the rod to form the L-ring and probably protects the motor/basal body from shearing forces during rotation. The chain is Flagellar P-ring protein from Campylobacter lari (strain RM2100 / D67 / ATCC BAA-1060).